A 266-amino-acid polypeptide reads, in one-letter code: Probable dihydroorotate dehydrogenase B (NAD(+)), electron transfer subunit (266 aa).

The FAD-binding FR-type domain maps to 5–99; sequence NVPEVLEIKR…RGPYGRGFEL (95 aa). The [2Fe-2S] cluster site is built by cysteine 217, cysteine 222, cysteine 225, and cysteine 235.

This sequence belongs to the PyrK family. As to quaternary structure, heterotetramer of 2 PyrK and 2 PyrD type B subunits. [2Fe-2S] cluster serves as cofactor. It depends on FAD as a cofactor.

It functions in the pathway pyrimidine metabolism; UMP biosynthesis via de novo pathway; orotate from (S)-dihydroorotate (NAD(+) route): step 1/1. Responsible for channeling the electrons from the oxidation of dihydroorotate from the FMN redox center in the PyrD type B subunit to the ultimate electron acceptor NAD(+). The chain is Probable dihydroorotate dehydrogenase B (NAD(+)), electron transfer subunit from Methanothermobacter thermautotrophicus (strain ATCC 29096 / DSM 1053 / JCM 10044 / NBRC 100330 / Delta H) (Methanobacterium thermoautotrophicum).